We begin with the raw amino-acid sequence, 1316 residues long: MLDVNFFDELRIGLATAEDIRQWSYGEVKKPETINYRTLKPEKDGLFCEKIFGPTRDWECYCGKYKRVRFKGIICERCGVEVTRAKVRRERMGHIELAAPVTHIWYFKGVPSRLGYLLDLAPKDLEKIIYFAAYVITSVDEEMRHNELSTLEAEMAVERKAVEDQRDGELEARAQKLEADLAELEAEGAKADARRKVRDGGEREMRQIRDRAQRELDRLEDIWSTFTKLAPKQLIVDENLYRELVDRYGEYFTGAMGAESIQKLIENFDIDAEAESLRDVIRNGKGQKKLRALKRLKVVAAFQQSGNSPMGMVLDAVPVIPPELRPMVQLDGGRFATSDLNDLYRRVINRNNRLKRLIDLGAPEIIVNNEKRMLQESVDALFDNGRRGRPVTGPGNRPLKSLSDLLKGKQGRFRQNLLGKRVDYSGRSVIVVGPQLKLHQCGLPKLMALELFKPFVMKRLVDLNHAQNIKSAKRMVERQRPQVWDVLEEVIAEHPVLLNRAPTLHRLGIQAFEPMLVEGKAIQLHPLVCEAFNADFDGDQMAVHLPLSAEAQAEARILMLSSNNILSPASGRPLAMPRLDMVTGLYYLTTEVPGDTGEYQPASGDHPETGVYSSPAEAIMAADRGVLSVRAKIKVRLTQLRPPVEIEAELFGHSGWQPGDAWMAETTLGRVMFNELLPLGYPFVNKQMHKKVQAAIINDLAERYPMIVVAQTVDKLKDAGFYWATRSGVTVSMADVLVPPRKKEILDHYEERADKVEKQFQRGALNHDERNEALVEIWKEATDEVGQALREHYPDDNPIITIVDSGATGNFTQTRTLAGMKGLVTNPKGEFIPRPVKSSFREGLTVLEYFINTHGARKGLADTALRTADSGYLTRRLVDVSQDVIVREHDCQTERGIVVELAERAPDGTLIRDPYIETSAYARTLGTDAVDEAGNVIVERGQDLGDPEIDALLAAGITQVKVRSVLTCATSTGVCATCYGRSMATGKLVDIGEAVGIVAAQSIGEPGTQLTMRTFHQGGVGEDITGGLPRVQELFEARVPRGKAPIADVTGRVRLEDGERFYKITIVPDDGGEEVVYDKISKRQRLRVFKHEDGSERVLSDGDHVEVGQQLMEGSADPHEVLRVQGPREVQIHLVREVQEVYRAQGVSIHDKHIEVIVRQMLRRVTIIDSGSTEFLPGSLIDRAEFEAENRRVVAEGGEPAAGRPVLMGITKASLATDSWLSAASFQETTRVLTDAAINCRSDKLNGLKENVIIGKLIPAGTGINRYRNIAVQPTEEARAAAYTIPSYEDQYYSPDFGAATGAAVPLDDYGYSDYR.

Zn(2+) contacts are provided by cysteine 60, cysteine 62, cysteine 75, and cysteine 78. Mg(2+) contacts are provided by aspartate 535, aspartate 537, and aspartate 539. Zn(2+) is bound by residues cysteine 891, cysteine 968, cysteine 975, and cysteine 978.

Belongs to the RNA polymerase beta' chain family. The RNAP catalytic core consists of 2 alpha, 1 beta, 1 beta' and 1 omega subunit. When a sigma factor is associated with the core the holoenzyme is formed, which can initiate transcription. Requires Mg(2+) as cofactor. The cofactor is Zn(2+).

It carries out the reaction RNA(n) + a ribonucleoside 5'-triphosphate = RNA(n+1) + diphosphate. Functionally, DNA-dependent RNA polymerase catalyzes the transcription of DNA into RNA using the four ribonucleoside triphosphates as substrates. In Mycobacterium tuberculosis (strain ATCC 25177 / H37Ra), this protein is DNA-directed RNA polymerase subunit beta'.